The primary structure comprises 228 residues: Odorant-binding protein 47 (228 aa).

Intrachain disulfides connect cysteine 60-cysteine 225, cysteine 73-cysteine 215, cysteine 74-cysteine 204, cysteine 88-cysteine 114, cysteine 110-cysteine 185, and cysteine 158-cysteine 195. Asparagine 117 is a glycosylation site (N-linked (GlcNAc...) asparagine).

Belongs to the PBP/GOBP family. Post-translationally, glycosylated. In terms of tissue distribution, head without antennae (at protein level).

The protein localises to the secreted. Functionally, present in the aqueous fluid surrounding olfactory sensory dendrites and are thought to aid in the capture and transport of hydrophobic odorants into and through this fluid. Binds N-phenyl-1-naphthylamine, menthol, citronellal, 1-dodecanol, decanal, p-tert-butylbenzophenone, 4-hydroxy-4'-isopropylazobenzene, 2-pyrrolyl-p-methyl-azobenzene and indole. Expressed in mosquito head but barely detectable in antennae, which suggests that it may be present in mouth structures, such as palpi and proboscis, and may have a function in taste. The sequence is that of Odorant-binding protein 47 from Anopheles gambiae (African malaria mosquito).